The following is a 203-amino-acid chain: 5-formyltetrahydrofolate cyclo-ligase (203 aa).

An N-acetylalanine modification is found at Ala-2. Residues 10-14 (KRSLR) and Arg-14 contribute to the ATP site. Residues Leu-56, Glu-61, and 148-152 (RGKGY) contribute to the substrate site. 145–153 (RLGRGKGYY) contributes to the ATP binding site. The Mg(2+) site is built by Asp-154 and Asp-189.

The protein belongs to the 5-formyltetrahydrofolate cyclo-ligase family. As to quaternary structure, monomer. It depends on Mg(2+) as a cofactor.

It localises to the cytoplasm. It catalyses the reaction (6S)-5-formyl-5,6,7,8-tetrahydrofolate + ATP = (6R)-5,10-methenyltetrahydrofolate + ADP + phosphate. Contributes to tetrahydrofolate metabolism. Helps regulate carbon flow through the folate-dependent one-carbon metabolic network that supplies carbon for the biosynthesis of purines, thymidine and amino acids. Catalyzes the irreversible conversion of 5-formyltetrahydrofolate (5-FTHF) to yield 5,10-methenyltetrahydrofolate. In Homo sapiens (Human), this protein is 5-formyltetrahydrofolate cyclo-ligase (MTHFS).